The sequence spans 150 residues: Non-specific lipid transfer protein GPI-anchored 7 (150 aa).

Residues 1 to 25 (MTKTMMIFAAAMTVMALLLVPTIEA) form the signal peptide. Disulfide bonds link Cys-29-Cys-66, Cys-36-Cys-50, Cys-51-Cys-92, and Cys-64-Cys-101. N-linked (GlcNAc...) asparagine glycosylation is found at Asn-41, Asn-79, and Asn-93. Positions 103–125 (AKGAPSPKASLPPPAPAGNTKKD) are disordered. The GPI-anchor amidated aspartate moiety is linked to residue Asp-125. A propeptide spans 126–150 (AGAGNKLAGYGVTTVILSLISSIFF) (removed in mature form).

The protein belongs to the plant LTP family. As to expression, up-regulated in the epidermis of stems.

Its subcellular location is the cell membrane. In terms of biological role, probable lipid transfer protein. This chain is Non-specific lipid transfer protein GPI-anchored 7, found in Arabidopsis thaliana (Mouse-ear cress).